Consider the following 131-residue polypeptide: Holin-like protein CidA (131 aa).

Helical transmembrane passes span valine 4–glycine 24, isoleucine 30–glutamine 50, phenylalanine 65–alanine 85, and isoleucine 88–leucine 108.

This sequence belongs to the CidA/LrgA family. CidA subfamily.

It localises to the cell membrane. Its function is as follows. Increases the activity of extracellular murein hydrolases possibly by mediating their export via hole formation. Inhibited by the antiholin-like proteins LrgAB. In an unstressed cell, the LrgAB products probably inhibit the function of the CidAB proteins. When a cell is stressed by the addition of antibiotics or by other factors in the environment, the CidAB proteins possibly oligomerize within the bacterial cell membrane, creating lesions that disrupt the proton motive force, which in turn results in loss of cell viability. These lesions are also hypothesized to regulate the subsequent cell lysis by either allowing the murein hydrolases access to the cell wall substrate and/or regulating their activity by a possible change in the cell wall pH that results from loss of membrane potential. This is Holin-like protein CidA from Staphylococcus aureus (strain Mu3 / ATCC 700698).